Here is a 54-residue protein sequence, read N- to C-terminus: Potassium channel toxin alpha-KTx 14.5 (54 aa).

Residues 1–23 (MKIFFAILLILAVCSMAIWTVNG) form the signal peptide. Intrachain disulfides connect Cys30/Cys46, Cys36/Cys51, and Cys40/Cys53.

Belongs to the short scorpion toxin superfamily. Potassium channel inhibitor family. Alpha-KTx 14 subfamily. As to expression, expressed by the venom gland.

Its subcellular location is the secreted. Inhibits potassium channels. May be active towards small conductance calcium-activated potassium channels (KCNN, SK), and less active towards voltage-gated potassium channels (Kv/KCN). This Mesobuthus gibbosus (Mediterranean checkered scorpion) protein is Potassium channel toxin alpha-KTx 14.5.